Consider the following 523-residue polypeptide: MTVSRLLKDRVRYAPYLKKVKPVEELIPLFKDGQYIGWSGFTGVGAPKAVPEALIKHVEENNLQGKLRFNLFVGASAGPEECKWAEHDMILRRAPHQVGKPIAKAINDGRIQFFDKHLSMFPQDLTYGYYSRNRTDGKILDYTIIEATAIKEDGSIVPGPSVGGSPEFISVSDKIIIEVNTATPSFEGLHDIDMPVNPPFRQPYPYTAVDQKNGLDSIPVDPERVVAVVESTQRDVVGPNTPSDATSQSIARHLVEFFENEVRHGRLPENLHPLQSGIGNIANAVIEGLTDSSFKNLTVWTEVLQDSFLDLFENGALDYATATSIRLTEAGFQKFFDNWDDFSKKLCLRSQVVSNNPELIRRLGVIAMNTPVEVDIYAHANSTNVSGSRMLNGLGGSADFLRNAKLSIMHAPAARPTKTDPTGISTIVPMASHVDQTEHDLDVLVTDQGLADLRGLSPRERAREIIKNCAHPDYQPILTDYLDRSEHYAKLHKCMHEPHMLKNAFKFHLNLSEKGTMKVDNWD.

A CoA-binding site is contributed by 277-281 (GIGNI). The 5-glutamyl coenzyme A thioester intermediate role is filled by E302. Residues N392 and G396 each contribute to the CoA site.

The protein belongs to the acetyl-CoA hydrolase/transferase family.

The protein resides in the cytoplasm. The enzyme catalyses acetyl-CoA + H2O = acetate + CoA + H(+). Presumably involved in regulating the intracellular acetyl-CoA pool for fatty acid and cholesterol synthesis and fatty acid oxidation. The chain is Acetyl-CoA hydrolase (ACH1) from Kluyveromyces lactis (strain ATCC 8585 / CBS 2359 / DSM 70799 / NBRC 1267 / NRRL Y-1140 / WM37) (Yeast).